Reading from the N-terminus, the 528-residue chain is Peptide chain release factor 3 (528 aa).

Residues 10–278 (DRRRTFGIIS…AFVQMAPPPH (269 aa)) enclose the tr-type G domain. Residues 19-26 (SHPDAGKT), 87-91 (DTPGH), and 141-144 (NKLD) contribute to the GTP site.

The protein belongs to the TRAFAC class translation factor GTPase superfamily. Classic translation factor GTPase family. PrfC subfamily.

The protein localises to the cytoplasm. In terms of biological role, increases the formation of ribosomal termination complexes and stimulates activities of RF-1 and RF-2. It binds guanine nucleotides and has strong preference for UGA stop codons. It may interact directly with the ribosome. The stimulation of RF-1 and RF-2 is significantly reduced by GTP and GDP, but not by GMP. The chain is Peptide chain release factor 3 from Syntrophobacter fumaroxidans (strain DSM 10017 / MPOB).